A 231-amino-acid polypeptide reads, in one-letter code: Cutinase 2 (231 aa).

The signal sequence occupies residues 1 to 16; the sequence is MKFFALTTLLAATASA. Cysteines 48 and 126 form a disulfide. Residue S137 is the Nucleophile of the active site. Residues C188 and C195 are joined by a disulfide bond. D192 is an active-site residue. H205 functions as the Proton donor/acceptor in the catalytic mechanism.

The protein belongs to the cutinase family. Post-translationally, the 2 disulfide bonds play a critical role in holding the catalytic residues in juxta-position; reduction of the disulfide bridges results in the complete inactivation of the enzyme.

It is found in the secreted. The catalysed reaction is cutin + H2O = cutin monomers.. Its function is as follows. Catalyzes the hydrolysis of complex carboxylic polyesters found in the cell wall of plants. Degrades cutin, a macromolecule that forms the structure of the plant cuticle. Allows pathogenic fungi to penetrate through the cuticular barrier into the host plant during the initial stage of fungal infection. The protein is Cutinase 2 (CUT2) of Fusarium vanettenii (Neocosmospora pisi).